Here is a 400-residue protein sequence, read N- to C-terminus: Nicotinate phosphoribosyltransferase (400 aa).

A Phosphohistidine; by autocatalysis modification is found at His-220.

This sequence belongs to the NAPRTase family. In terms of processing, transiently phosphorylated on a His residue during the reaction cycle. Phosphorylation strongly increases the affinity for substrates and increases the rate of nicotinate D-ribonucleotide production. Dephosphorylation regenerates the low-affinity form of the enzyme, leading to product release.

The catalysed reaction is nicotinate + 5-phospho-alpha-D-ribose 1-diphosphate + ATP + H2O = nicotinate beta-D-ribonucleotide + ADP + phosphate + diphosphate. It functions in the pathway cofactor biosynthesis; NAD(+) biosynthesis; nicotinate D-ribonucleotide from nicotinate: step 1/1. In terms of biological role, catalyzes the synthesis of beta-nicotinate D-ribonucleotide from nicotinate and 5-phospho-D-ribose 1-phosphate at the expense of ATP. The sequence is that of Nicotinate phosphoribosyltransferase from Cronobacter sakazakii (strain ATCC BAA-894) (Enterobacter sakazakii).